We begin with the raw amino-acid sequence, 349 residues long: uncharacterized protein (349 aa).

This is an uncharacterized protein from Archaeoglobus fulgidus (strain ATCC 49558 / DSM 4304 / JCM 9628 / NBRC 100126 / VC-16).